Reading from the N-terminus, the 296-residue chain is Protoheme IX farnesyltransferase (296 aa).

Transmembrane regions (helical) follow at residues 13–33 (IIFG…KGII), 35–55 (YPLF…GCVF), 84–104 (VTLI…YIAA), 107–127 (LAMW…SLYM), 132–152 (VYGT…GYCA), 162–182 (LILL…IAIF), 208–228 (ITLY…VGYA), 229–249 (GYKY…MALR), and 264–284 (FVFS…DFSV).

The protein belongs to the UbiA prenyltransferase family. Protoheme IX farnesyltransferase subfamily.

The protein resides in the cell inner membrane. The enzyme catalyses heme b + (2E,6E)-farnesyl diphosphate + H2O = Fe(II)-heme o + diphosphate. Its pathway is porphyrin-containing compound metabolism; heme O biosynthesis; heme O from protoheme: step 1/1. Its function is as follows. Converts heme B (protoheme IX) to heme O by substitution of the vinyl group on carbon 2 of heme B porphyrin ring with a hydroxyethyl farnesyl side group. The sequence is that of Protoheme IX farnesyltransferase from Edwardsiella ictaluri (strain 93-146).